Here is a 292-residue protein sequence, read N- to C-terminus: MSDPVELLKRAEKKGVPSSGFMKLFSGSDSYKFEEAADLCVQAATIYRLRKELNLAGDSFLKAADYQKKAGNEDEAGNTYVEAYKCFKSGGNSVNAVDSLENAIQIFTHRGQFRRGANFKFELGEILENDLHDYAKAIDCYELAGEWYAQDQSVALSNKCFIKCADLKALDGQYIEASDIYSKLIKSSMGNRLSQWSLKDYFLKKGLCQLAATDAVAAARTLQEGQSEDPNFADSRESNFLKSLIDAVNEGDSEQLSEHCKEFDNFMRLDKWKITILNKIKESIQQQEDDLL.

N-acetylserine is present on S2. K261 participates in a covalent cross-link: Glycyl lysine isopeptide (Lys-Gly) (interchain with G-Cter in ubiquitin).

The protein belongs to the SNAP family. Binds to vacuolar cis-SNARE complexes composed of the v-SNAREs NYV1, VTI1 and YKT6, and the t-SNAREs VAM3 and VAM7. Interacts with SEC18.

The protein localises to the membrane. SNARE complex protein that binds to cis-SNARE complexes on membranes and is required for vesicular transport between the endoplasmic reticulum and the Golgi apparatus and for homotypic vacuole fusion. During the priming step of membrane fusion, is released from cis-SNARE complexes by SEC18 to establish a pool of unpaired SNAREs, which are required for interactions in trans during docking and fusion steps. Can displace HOPS from SNARE complexes, which may be a prerequisite for trans-SNARE complex disassembly and subsequent rounds of priming, docking and fusion. The chain is Alpha-soluble NSF attachment protein (SEC17) from Saccharomyces cerevisiae (strain ATCC 204508 / S288c) (Baker's yeast).